Consider the following 280-residue polypeptide: MSGSSSPSLWLAPNPSKRWGELFFLFYTPFWLTLCLGIVVPYKLYETFTELEYLLLALVSAVPAFVIPMLLVGKADRSLCWKDRYWVKANLWIIVFSYVGNYFWTHYFFKVLGASYTFPSWKMNNVPHTTFFLTHVCFLFYHVASNITLRRLRHSTADLPDSLKWCFEAAWILALSYFIAYLETIAIANFPYYEFVDRSAMYRVGCLFYAIYFIVSFPMFFRMDEKSTDEWDLSRVAVDALGAAMLVTIILDLWRLFLGPIVPLPEGQNCLQSGLPWFSN.

6 consecutive transmembrane segments (helical) span residues 22 to 42, 53 to 73, 89 to 109, 167 to 187, 201 to 221, and 244 to 264; these read LFFLFYTPFWLTLCLGIVVPY, YLLLALVSAVPAFVIPMLLVG, ANLWIIVFSYVGNYFWTHYFF, FEAAWILALSYFIAYLETIAI, MYRVGCLFYAIYFIVSFPMFF, and AMLVTIILDLWRLFLGPIVPL.

Its subcellular location is the membrane. It catalyses the reaction cycloeucalenol = obtusifoliol. Converts pentacyclic cyclopropyl sterols to tetracyclic sterols. This chain is Cycloeucalenol cycloisomerase (CPI1), found in Arabidopsis thaliana (Mouse-ear cress).